The primary structure comprises 243 residues: Anti-H(O) lectin 1 (243 aa).

Asparagine 10 carries an N-linked (GlcNAc...) asparagine; partial glycan. A glycan (N-linked (GlcNAc...) asparagine) is linked at asparagine 116. Residues glutamate 126 and aspartate 128 each contribute to the Mn(2+) site. Ca(2+) contacts are provided by aspartate 128, asparagine 135, and aspartate 138. Mn(2+) contacts are provided by aspartate 138 and histidine 143.

It belongs to the leguminous lectin family.

In terms of biological role, L-fucose specific lectin. In Ulex europaeus (Furze), this protein is Anti-H(O) lectin 1.